A 310-amino-acid polypeptide reads, in one-letter code: Small ribosomal subunit biogenesis GTPase RsgA 2 (310 aa).

A CP-type G domain is found at 77–238 (LSKQSHILAA…IIDTPGIKGF (162 aa)). GTP contacts are provided by residues 126–129 (NKVD) and 180–188 (GHSGVGKST). The Zn(2+) site is built by Cys-262, Cys-267, His-269, and Cys-275.

This sequence belongs to the TRAFAC class YlqF/YawG GTPase family. RsgA subfamily. Monomer. Associates with 30S ribosomal subunit, binds 16S rRNA. Requires Zn(2+) as cofactor.

The protein localises to the cytoplasm. In terms of biological role, one of several proteins that assist in the late maturation steps of the functional core of the 30S ribosomal subunit. Helps release RbfA from mature subunits. May play a role in the assembly of ribosomal proteins into the subunit. Circularly permuted GTPase that catalyzes slow GTP hydrolysis, GTPase activity is stimulated by the 30S ribosomal subunit. In Bacteroides thetaiotaomicron (strain ATCC 29148 / DSM 2079 / JCM 5827 / CCUG 10774 / NCTC 10582 / VPI-5482 / E50), this protein is Small ribosomal subunit biogenesis GTPase RsgA 2.